Reading from the N-terminus, the 80-residue chain is Homeobox protein 7 (80 aa).

Positions 8 to 67 form a DNA-binding region, homeobox; the sequence is SNIRNIRSSGISTKKLEDFFSINQYPNKNEIKDFANYYQCDETKIKNWFKGKRDRLKKKS. The tract at residues 60 to 80 is disordered; sequence RDRLKKKSSNNEKSGNKFYFK. Residues 70–80 are compositionally biased toward low complexity; it reads NEKSGNKFYFK.

It localises to the nucleus. Functionally, putative transcription factor. This Dictyostelium discoideum (Social amoeba) protein is Homeobox protein 7 (hbx7).